The primary structure comprises 404 residues: Nicotinate phosphoribosyltransferase (404 aa).

His224 is subject to Phosphohistidine; by autocatalysis.

Belongs to the NAPRTase family. In terms of processing, transiently phosphorylated on a His residue during the reaction cycle. Phosphorylation strongly increases the affinity for substrates and increases the rate of nicotinate D-ribonucleotide production. Dephosphorylation regenerates the low-affinity form of the enzyme, leading to product release.

It carries out the reaction nicotinate + 5-phospho-alpha-D-ribose 1-diphosphate + ATP + H2O = nicotinate beta-D-ribonucleotide + ADP + phosphate + diphosphate. The protein operates within cofactor biosynthesis; NAD(+) biosynthesis; nicotinate D-ribonucleotide from nicotinate: step 1/1. Its function is as follows. Catalyzes the synthesis of beta-nicotinate D-ribonucleotide from nicotinate and 5-phospho-D-ribose 1-phosphate at the expense of ATP. The polypeptide is Nicotinate phosphoribosyltransferase (Photorhabdus laumondii subsp. laumondii (strain DSM 15139 / CIP 105565 / TT01) (Photorhabdus luminescens subsp. laumondii)).